The chain runs to 127 residues: MFRTILGGKIHRATVTEADLNYVGSITVDQDLLDAAGICPNEKVAIVNNNNGERFETYTIAGKRGSGVICLNGAAARLVQKGDIVIIMSYIQLSEPEIAAHEPKVVLVDGNNKIRDIISYEPPHTVL.

Serine 25 acts as the Schiff-base intermediate with substrate; via pyruvic acid in catalysis. Pyruvic acid (Ser) is present on serine 25. Residue threonine 57 participates in substrate binding. The active-site Proton donor is the tyrosine 58. A substrate-binding site is contributed by 73 to 75; that stretch reads GAA.

It belongs to the PanD family. In terms of assembly, heterooctamer of four alpha and four beta subunits. Pyruvate is required as a cofactor. In terms of processing, is synthesized initially as an inactive proenzyme, which is activated by self-cleavage at a specific serine bond to produce a beta-subunit with a hydroxyl group at its C-terminus and an alpha-subunit with a pyruvoyl group at its N-terminus.

The protein resides in the cytoplasm. It catalyses the reaction L-aspartate + H(+) = beta-alanine + CO2. It functions in the pathway cofactor biosynthesis; (R)-pantothenate biosynthesis; beta-alanine from L-aspartate: step 1/1. In terms of biological role, catalyzes the pyruvoyl-dependent decarboxylation of aspartate to produce beta-alanine. The polypeptide is Aspartate 1-decarboxylase (Neisseria gonorrhoeae (strain ATCC 700825 / FA 1090)).